A 328-amino-acid polypeptide reads, in one-letter code: Diaminopimelate epimerase (328 aa).

Positions 14 and 73 each coordinate substrate. The active-site Proton donor is Cys-82. Substrate-binding positions include 83 to 84 (GN), Asn-170, Asn-206, and 224 to 225 (ER). Cys-233 (proton acceptor) is an active-site residue. 234–235 (GT) lines the substrate pocket.

It belongs to the diaminopimelate epimerase family. As to quaternary structure, homodimer.

It localises to the cytoplasm. The enzyme catalyses (2S,6S)-2,6-diaminopimelate = meso-2,6-diaminopimelate. The protein operates within amino-acid biosynthesis; L-lysine biosynthesis via DAP pathway; DL-2,6-diaminopimelate from LL-2,6-diaminopimelate: step 1/1. Catalyzes the stereoinversion of LL-2,6-diaminopimelate (L,L-DAP) to meso-diaminopimelate (meso-DAP), a precursor of L-lysine and an essential component of the bacterial peptidoglycan. This chain is Diaminopimelate epimerase, found in Listeria welshimeri serovar 6b (strain ATCC 35897 / DSM 20650 / CCUG 15529 / CIP 8149 / NCTC 11857 / SLCC 5334 / V8).